The sequence spans 345 residues: uncharacterized protein (345 aa).

The protein belongs to the methyltransferase superfamily.

This is an uncharacterized protein from Streptomyces fradiae (Streptomyces roseoflavus).